Consider the following 307-residue polypeptide: Elongation factor Ts (307 aa).

Residues 80-83 form an involved in Mg(2+) ion dislocation from EF-Tu region; the sequence is TDFV.

This sequence belongs to the EF-Ts family.

The protein localises to the cytoplasm. Its function is as follows. Associates with the EF-Tu.GDP complex and induces the exchange of GDP to GTP. It remains bound to the aminoacyl-tRNA.EF-Tu.GTP complex up to the GTP hydrolysis stage on the ribosome. This Clostridium botulinum (strain 657 / Type Ba4) protein is Elongation factor Ts.